The following is a 217-amino-acid chain: Magnetosome protein MamA (217 aa).

TPR repeat units lie at residues 12 to 44, 46 to 79, 80 to 113, 114 to 147, 148 to 181, and 182 to 215; these read VTLY…NDDI, QVYY…DAFD, VDVA…APDN, VKVA…NPIN, FNVR…RPNE, and GKVH…DEGA. The N-terminal domain (NTD) stretch occupies residues 41–112; sequence NDDIRQVYYR…LERSLADAPD (72 aa). A C-terminal domain (CTD) region spans residues 113–217; sequence NVKVATVLGL…ANELDEGASV (105 aa).

It belongs to the magnetosome MamA family. As to quaternary structure, oligomerizes into high molecular weight complexes (at least 560 kDa). Forms round, 20 nm diameter complexes with a central cavity. Interacts with full-length Mms6. Probably binds MamC.

It localises to the magnetosome membrane. In terms of biological role, probably forms a large homooligomer on which other magnetosome subunits assemble. Required for formation of functional magnetosomes from pre-existing vesicles, it has a dynamic location in the cell. This chain is Magnetosome protein MamA, found in Paramagnetospirillum magneticum (strain ATCC 700264 / AMB-1) (Magnetospirillum magneticum).